Reading from the N-terminus, the 268-residue chain is tRNA pseudouridine synthase A (268 aa).

The active-site Nucleophile is D63. Position 122 (Y122) interacts with substrate.

Belongs to the tRNA pseudouridine synthase TruA family. Homodimer.

It carries out the reaction uridine(38/39/40) in tRNA = pseudouridine(38/39/40) in tRNA. Functionally, formation of pseudouridine at positions 38, 39 and 40 in the anticodon stem and loop of transfer RNAs. This is tRNA pseudouridine synthase A from Treponema denticola (strain ATCC 35405 / DSM 14222 / CIP 103919 / JCM 8153 / KCTC 15104).